The sequence spans 207 residues: Probable flagellin 2 (207 aa).

The propeptide occupies 1 to 14 (MRVGSRKLRRDEKG).

Belongs to the archaeal flagellin family.

It localises to the archaeal flagellum. Its function is as follows. Flagellin is the subunit protein which polymerizes to form the filaments of archaeal flagella. The chain is Probable flagellin 2 (flaB2) from Archaeoglobus fulgidus (strain ATCC 49558 / DSM 4304 / JCM 9628 / NBRC 100126 / VC-16).